Here is a 317-residue protein sequence, read N- to C-terminus: Transaldolase 1 (317 aa).

Lysine 132 serves as the catalytic Schiff-base intermediate with substrate.

The protein belongs to the transaldolase family. Type 1 subfamily. In terms of assembly, homodimer.

It is found in the cytoplasm. The enzyme catalyses D-sedoheptulose 7-phosphate + D-glyceraldehyde 3-phosphate = D-erythrose 4-phosphate + beta-D-fructose 6-phosphate. Its pathway is carbohydrate degradation; pentose phosphate pathway; D-glyceraldehyde 3-phosphate and beta-D-fructose 6-phosphate from D-ribose 5-phosphate and D-xylulose 5-phosphate (non-oxidative stage): step 2/3. Its function is as follows. Transaldolase is important for the balance of metabolites in the pentose-phosphate pathway. The sequence is that of Transaldolase 1 from Shigella sonnei (strain Ss046).